The sequence spans 185 residues: ATP synthase subunit b (185 aa).

A helical transmembrane segment spans residues 27–47; the sequence is GALIWKGLNILAFLGIVYYFG.

This sequence belongs to the ATPase B chain family. In terms of assembly, F-type ATPases have 2 components, F(1) - the catalytic core - and F(0) - the membrane proton channel. F(1) has five subunits: alpha(3), beta(3), gamma(1), delta(1), epsilon(1). F(0) has three main subunits: a(1), b(2) and c(10-14). The alpha and beta chains form an alternating ring which encloses part of the gamma chain. F(1) is attached to F(0) by a central stalk formed by the gamma and epsilon chains, while a peripheral stalk is formed by the delta and b chains.

The protein resides in the cell inner membrane. Its function is as follows. F(1)F(0) ATP synthase produces ATP from ADP in the presence of a proton or sodium gradient. F-type ATPases consist of two structural domains, F(1) containing the extramembraneous catalytic core and F(0) containing the membrane proton channel, linked together by a central stalk and a peripheral stalk. During catalysis, ATP synthesis in the catalytic domain of F(1) is coupled via a rotary mechanism of the central stalk subunits to proton translocation. In terms of biological role, component of the F(0) channel, it forms part of the peripheral stalk, linking F(1) to F(0). The sequence is that of ATP synthase subunit b from Aquifex aeolicus (strain VF5).